We begin with the raw amino-acid sequence, 278 residues long: Urease accessory protein UreD (278 aa).

This sequence belongs to the UreD family. In terms of assembly, ureD, UreF and UreG form a complex that acts as a GTP-hydrolysis-dependent molecular chaperone, activating the urease apoprotein by helping to assemble the nickel containing metallocenter of UreC. The UreE protein probably delivers the nickel.

The protein localises to the cytoplasm. Required for maturation of urease via the functional incorporation of the urease nickel metallocenter. The protein is Urease accessory protein UreD of Deinococcus radiodurans (strain ATCC 13939 / DSM 20539 / JCM 16871 / CCUG 27074 / LMG 4051 / NBRC 15346 / NCIMB 9279 / VKM B-1422 / R1).